Here is a 4835-residue protein sequence, read N- to C-terminus: Midasin (4835 aa).

6 AAA-ATPase protomer regions span residues 12–161 (EVLR…PLVL), 324–689 (RSLD…HRFR), 797–1049 (MTTI…AEII), 1096–1375 (KFQD…DYIT), 1489–1738 (APTT…FGYR), and 1821–2110 (ALEA…SIDI). Residues 31–38 (GPSASGRT), 356–363 (GPTGIGKT), 814–821 (GTTSSGKT), 1127–1134 (GVSGAGKT), 1513–1520 (GDPGVGKS), and 1839–1846 (GSPESGKS) each bind ATP. The linker stretch occupies residues 2197–4058 (SVFIASTLNA…DGTGDQNVSK (1862 aa)). Disordered stretches follow at residues 4033–4056 (DQKE…DQNV) and 4108–4523 (IEEE…LLNP). 5 stretches are compositionally biased toward acidic residues: residues 4109-4133 (EEED…QGEA), 4141-4150 (EDDDSAEEYS), 4226-4241 (ADGE…EEEQ), 4282-4291 (VDIDDNEASD), and 4315-4330 (NDEE…DQEN). A compositionally biased stretch (polar residues) spans 4331 to 4346 (ITDSNPDANEVGTNDQ). Basic and acidic residues-rich tracts occupy residues 4347–4360 (KQTH…RQEN), 4394–4415 (EFQR…KDEA), and 4429–4438 (VEFDDSKSGR). Polar residues predominate over residues 4468–4477 (HNSSCETSQS). Over residues 4478-4488 (SHDRPPAEHLN) the composition is skewed to basic and acidic residues. Positions 4629–4818 (QVLLAVDDSS…RHIEDLPETL (190 aa)) constitute a VWFA domain.

Belongs to the midasin family. Associates with pre-60S ribosomes in the nucleoplasm.

The protein localises to the nucleus. It is found in the nucleolus. The protein resides in the nucleoplasm. Its function is as follows. Nuclear chaperone required for maturation and nuclear export of pre-60S ribosome subunits. Functions at successive maturation steps to remove ribosomal factors at critical transition points, first driving the exit of early pre-60S particles from the nucleolus and then driving late pre-60S particles from the nucleus. This Giardia intestinalis (Giardia lamblia) protein is Midasin (MDN1).